The primary structure comprises 493 residues: Probable plastidic glucose transporter 2 (493 aa).

A compositionally biased stretch (polar residues) spans 1 to 14 (MLGLQRETSSMYKR). The tract at residues 1 to 24 (MLGLQRETSSMYKRTSSRDYSPMI) is disordered. 12 consecutive transmembrane segments (helical) span residues 52 to 72 (LPHV…LGVV), 94 to 114 (LVVS…GGVA), 128 to 148 (LPMI…VMLL), 151 to 171 (FLVG…VTEV), 182 to 202 (SFIQ…GIPV), 211 to 231 (VCFW…FLCA), 293 to 313 (VVFI…NAVF), 329 to 349 (LGNI…MVLM), 356 to 376 (LLLL…VGAT), 392 to 412 (GTLV…GLLL), 424 to 444 (AMAF…LLFL), and 450 to 470 (LGPR…VMFV).

This sequence belongs to the major facilitator superfamily. Sugar transporter (TC 2.A.1.1) family.

The protein localises to the plastid. It localises to the chloroplast membrane. Its function is as follows. May be involved in the efflux of glucose towards the cytosol. In Arabidopsis thaliana (Mouse-ear cress), this protein is Probable plastidic glucose transporter 2.